Reading from the N-terminus, the 56-residue chain is Bacteriocin sublancin-168 (56 aa).

Positions 1 to 19 (MEKLFKEVKLEELENQKGS) are excised as a propeptide. 2 disulfides stabilise this stretch: C26–C55 and C33–C48. S-linked (Glc) cysteine; by host glycosylation occurs at C41.

Monomer. In terms of processing, production of active sublancin-168 requires at least one thiol-disulfide oxidoreductase (BdbB or, in its absence, BdbC). Membrane translocation and cleavage of the precursor are probably performed by SunT.

The protein localises to the secreted. In terms of biological role, bacteriocin active against Gram-positive bacteria. Inhibits B.cereus spore outgrowth, after the germination stage, approximately 1000-fold better than it inhibits exponential growth of the same cells. Inhibits B.subtilis strain ATCC 6633. The chain is Bacteriocin sublancin-168 (sunA) from Bacillus pumilus (Bacillus mesentericus).